The chain runs to 167 residues: GTP-dependent dephospho-CoA kinase (167 aa).

GTP is bound by residues aspartate 39, valine 41, aspartate 58, lysine 60, and glutamate 117.

It belongs to the GTP-dependent DPCK family.

It carries out the reaction 3'-dephospho-CoA + GTP = GDP + CoA + H(+). Its pathway is cofactor biosynthesis; coenzyme A biosynthesis. In terms of biological role, catalyzes the GTP-dependent phosphorylation of the 3'-hydroxyl group of dephosphocoenzyme A to form coenzyme A (CoA). This chain is GTP-dependent dephospho-CoA kinase, found in Korarchaeum cryptofilum (strain OPF8).